We begin with the raw amino-acid sequence, 1409 residues long: DNA-directed RNA polymerase subunit beta' (1409 aa).

Cys-70, Cys-72, Cys-85, and Cys-88 together coordinate Zn(2+). Mg(2+) is bound by residues Asp-460, Asp-462, and Asp-464. Zn(2+)-binding residues include Cys-814, Cys-888, Cys-895, and Cys-898.

It belongs to the RNA polymerase beta' chain family. The RNAP catalytic core consists of 2 alpha, 1 beta, 1 beta' and 1 omega subunit. When a sigma factor is associated with the core the holoenzyme is formed, which can initiate transcription. Mg(2+) serves as cofactor. It depends on Zn(2+) as a cofactor.

It catalyses the reaction RNA(n) + a ribonucleoside 5'-triphosphate = RNA(n+1) + diphosphate. Functionally, DNA-dependent RNA polymerase catalyzes the transcription of DNA into RNA using the four ribonucleoside triphosphates as substrates. This chain is DNA-directed RNA polymerase subunit beta', found in Shewanella violacea.